A 257-amino-acid chain; its full sequence is Small ribosomal subunit protein uS3 (257 aa).

The region spanning 40–110 (IRKYLSTKYK…LVSLKVVEVQ (71 aa)) is the KH type-2 domain. Positions 223–257 (ANKEFSRSSKPKKGSFNRSSRSKNTKPAPKQAVSE) are disordered. Residues 231–246 (SKPKKGSFNRSSRSKN) are compositionally biased toward basic residues.

It belongs to the universal ribosomal protein uS3 family. Part of the 30S ribosomal subunit. Forms a tight complex with proteins S10 and S14.

Functionally, binds the lower part of the 30S subunit head. Binds mRNA in the 70S ribosome, positioning it for translation. In Ureaplasma parvum serovar 3 (strain ATCC 27815 / 27 / NCTC 11736), this protein is Small ribosomal subunit protein uS3.